The primary structure comprises 238 residues: Large ribosomal subunit protein uL2 (238 aa).

Positions 1 to 11 (MGKRLISQNRG) are enriched in polar residues. 2 disordered regions span residues 1–22 (MGKRLISQNRGRGTPTYRAPSH) and 202–223 (FGGGAWKHPGKPTTVSRNAPPG).

This sequence belongs to the universal ribosomal protein uL2 family. Part of the 50S ribosomal subunit. Forms a bridge to the 30S subunit in the 70S ribosome.

In terms of biological role, one of the primary rRNA binding proteins. Required for association of the 30S and 50S subunits to form the 70S ribosome, for tRNA binding and peptide bond formation. It has been suggested to have peptidyltransferase activity; this is somewhat controversial. Makes several contacts with the 16S rRNA in the 70S ribosome. The chain is Large ribosomal subunit protein uL2 from Methanosarcina acetivorans (strain ATCC 35395 / DSM 2834 / JCM 12185 / C2A).